Reading from the N-terminus, the 955-residue chain is Protein translocase subunit SecA (955 aa).

Residues Q87, 105–109 (GEGKT), and D494 contribute to the ATP site. A disordered region spans residues 861-955 (ASPAPAAPRP…KKAPRTKRKR (95 aa)). Residues 874–888 (QEAAQQAQGTAAPSA) are compositionally biased toward low complexity. Positions 943-955 (SKGKKAPRTKRKR) are enriched in basic residues.

It belongs to the SecA family. Monomer and homodimer. Part of the essential Sec protein translocation apparatus which comprises SecA, SecYEG and auxiliary proteins SecDF. Other proteins may also be involved.

The protein localises to the cell membrane. The protein resides in the cytoplasm. The catalysed reaction is ATP + H2O + cellular proteinSide 1 = ADP + phosphate + cellular proteinSide 2.. In terms of biological role, part of the Sec protein translocase complex. Interacts with the SecYEG preprotein conducting channel. Has a central role in coupling the hydrolysis of ATP to the transfer of proteins into and across the cell membrane, serving as an ATP-driven molecular motor driving the stepwise translocation of polypeptide chains across the membrane. The protein is Protein translocase subunit SecA of Rhodococcus jostii (strain RHA1).